The following is a 759-amino-acid chain: DNA replication licensing factor mcm-5 (759 aa).

The MCM domain occupies 330-536; the sequence is AYELIAKSIA…KDATLAKHVI (207 aa). Residue arginine 370 participates in ADP binding. The Arginine finger signature appears at 511–514; sequence SRFD.

The protein belongs to the MCM family. In terms of assembly, component of the mcm2-7 complex. The complex forms a toroidal hexameric ring with the proposed subunit order mcm2-mcm6-mcm4-mcm7-mcm3-mcm5 (By simililarity).

It is found in the nucleus. The protein resides in the cytoplasm. Its subcellular location is the cytosol. The catalysed reaction is ATP + H2O = ADP + phosphate + H(+). Functionally, acts as a component of the MCM2-7 complex (MCM complex) which is the replicative helicase essential for 'once per cell cycle' DNA replication initiation and elongation in eukaryotic cells. Core component of CDC45-MCM-GINS (CMG) helicase, the molecular machine that unwinds template DNA during replication, and around which the replisome is built. The active ATPase sites in the MCM2-7 ring are formed through the interaction surfaces of two neighboring subunits such that a critical structure of a conserved arginine finger motif is provided in trans relative to the ATP-binding site of the Walker A box of the adjacent subunit. The six ATPase active sites, however, are likely to contribute differentially to the complex helicase activity. The chain is DNA replication licensing factor mcm-5 (mcm-5) from Caenorhabditis elegans.